Here is a 137-residue protein sequence, read N- to C-terminus: Sec-independent protein translocase protein TatB (137 aa).

A helical membrane pass occupies residues 2-22 (FANIGWGEMLILVIAGLVILG). The segment at 92–137 (FFTGKFDQQNGKPAAGQEKPVTPVNPPVTATPPSESTATPFDSDAT) is disordered. Residues 122 to 131 (TPPSESTATP) are compositionally biased toward low complexity.

It belongs to the TatB family. The Tat system comprises two distinct complexes: a TatABC complex, containing multiple copies of TatA, TatB and TatC subunits, and a separate TatA complex, containing only TatA subunits. Substrates initially bind to the TatABC complex, which probably triggers association of the separate TatA complex to form the active translocon.

Its subcellular location is the cell membrane. Part of the twin-arginine translocation (Tat) system that transports large folded proteins containing a characteristic twin-arginine motif in their signal peptide across membranes. Together with TatC, TatB is part of a receptor directly interacting with Tat signal peptides. TatB may form an oligomeric binding site that transiently accommodates folded Tat precursor proteins before their translocation. This is Sec-independent protein translocase protein TatB from Mycobacterium sp. (strain JLS).